Reading from the N-terminus, the 360-residue chain is MDSRNCKVNAPLLSQRYRRMVTKDGHSTLQMDGAQRGLVYLRDAWGILMDMRWRWMMLVFSASFVVHWLVFAVLWYAVAEMNGDLEIDHDVPPENHTICVKHITSFTAAFSFSLETQLTIGYGTMFPSGDCPSAIALLAIQMLLGLMLEAFITGAFVAKIARPKNRAFSIRFTDLAVVAHKDGKPNLIFQVANTRPSPLTSVRVSAVLYQERENGELYQTSVDFHLDGISSEECPFFIFPLTYYHTITPSSPLATLLQHETPSHFELVVFLSAMQEGTGEICQRRTSYLPSEIMLHHRFAALMTRGSKGEYQVKMENFDKTVPEHPTPVVSKSPHRTDLDIHINGQSIDNFQIAETGLTE.

At 1–50 (MDSRNCKVNAPLLSQRYRRMVTKDGHSTLQMDGAQRGLVYLRDAWGILMD) the chain is on the cytoplasmic side. Residues 51–77 (MRWRWMMLVFSASFVVHWLVFAVLWYA) form a helical membrane-spanning segment. The Extracellular segment spans residues 78–105 (VAEMNGDLEIDHDVPPENHTICVKHITS). The helical; Pore-forming intramembrane region spans 106–122 (FTAAFSFSLETQLTIGY). The Selectivity filter motif lies at 119–124 (TIGYGT). At 123–131 (GTMFPSGDC) the chain is on the extracellular side. A helical membrane pass occupies residues 132 to 157 (PSAIALLAIQMLLGLMLEAFITGAFV). Topologically, residues 158–360 (AKIARPKNRA…FQIAETGLTE (203 aa)) are cytoplasmic. Ser201 is modified (phosphoserine; by PKC). At Ser287 the chain carries Phosphoserine; by PKA.

This sequence belongs to the inward rectifier-type potassium channel (TC 1.A.2.1) family. KCNJ13 subfamily. In terms of assembly, homotetramer. Interacts with RAB28; the interaction may facilitate cone outer segments phagocytosis. Phosphorylation at Ser-201 by PKC strongly inhibits ionic currents, while phosphorylation at Ser-287 by PKA increases them.

It localises to the membrane. The protein resides in the cell membrane. It carries out the reaction K(+)(in) = K(+)(out). Its activity is regulated as follows. Inhibited by Ba(2+) and Cs(+), although sensitivity to those inhibitors is much lower than in other Kir channels. Inward rectifier potassium channels are characterized by a greater tendency to allow potassium to flow into the cell rather than out of it. Their voltage dependence is regulated by the concentration of extracellular potassium; as external potassium is raised, the voltage range of the channel opening shifts to more positive voltages. The inward rectification is mainly due to the blockage of outward current by internal magnesium. KCNJ13 has a very low single channel conductance, low sensitivity to block by external barium and cesium, and no dependence of its inward rectification properties on the internal blocking particle magnesium. In Rattus norvegicus (Rat), this protein is Inward rectifier potassium channel 13 (Kcnj13).